The sequence spans 326 residues: Probable 9-O-acetyl-N-acetylneuraminic acid deacetylase (326 aa).

The N-terminal stretch at 1-21 (MNAIISPDYYYVLTVAGQSNA) is a signal peptide.

It is found in the periplasm. Probably catalyzes the hydrolysis of the 9-O-acetyl group of 9-O-acetyl-N-acetylneuraminate (Neu5,9Ac2). Is required for growth of E.coli on Neu5,9Ac2, an alternative sialic acid commonly found in mammalian host mucosal sites, in particular in the human intestine. This is Probable 9-O-acetyl-N-acetylneuraminic acid deacetylase (nanS) from Escherichia coli (strain K12).